Here is a 384-residue protein sequence, read N- to C-terminus: Queuine tRNA-ribosyltransferase (384 aa).

Aspartate 93 acts as the Proton acceptor in catalysis. Residues 93 to 97 (DSGGF), aspartate 147, glutamine 202, and glycine 229 contribute to the substrate site. Residues 260–266 (GVGYPEE) are RNA binding. The active-site Nucleophile is the aspartate 279. Residues 284-288 (TRAAR) form an RNA binding; important for wobble base 34 recognition region. Residues cysteine 317, cysteine 319, cysteine 322, and histidine 348 each coordinate Zn(2+).

This sequence belongs to the queuine tRNA-ribosyltransferase family. In terms of assembly, homodimer. Within each dimer, one monomer is responsible for RNA recognition and catalysis, while the other monomer binds to the replacement base PreQ1. Zn(2+) serves as cofactor.

The enzyme catalyses 7-aminomethyl-7-carbaguanine + guanosine(34) in tRNA = 7-aminomethyl-7-carbaguanosine(34) in tRNA + guanine. It functions in the pathway tRNA modification; tRNA-queuosine biosynthesis. Catalyzes the base-exchange of a guanine (G) residue with the queuine precursor 7-aminomethyl-7-deazaguanine (PreQ1) at position 34 (anticodon wobble position) in tRNAs with GU(N) anticodons (tRNA-Asp, -Asn, -His and -Tyr). Catalysis occurs through a double-displacement mechanism. The nucleophile active site attacks the C1' of nucleotide 34 to detach the guanine base from the RNA, forming a covalent enzyme-RNA intermediate. The proton acceptor active site deprotonates the incoming PreQ1, allowing a nucleophilic attack on the C1' of the ribose to form the product. After dissociation, two additional enzymatic reactions on the tRNA convert PreQ1 to queuine (Q), resulting in the hypermodified nucleoside queuosine (7-(((4,5-cis-dihydroxy-2-cyclopenten-1-yl)amino)methyl)-7-deazaguanosine). The protein is Queuine tRNA-ribosyltransferase of Koribacter versatilis (strain Ellin345).